Here is a 2238-residue protein sequence, read N- to C-terminus: RNA-directed RNA polymerase L (2238 aa).

An endonuclease region spans residues 26 to 284 (ITLVTCQNDA…THHSEHPVDC (259 aa)). Residues E51, D89, and E102 each contribute to the Mn(2+) site. K115 is an active-site residue. The RdRp catalytic domain occupies 1188-1387 (TDMKMCVNLG…FISTKFNKFV (200 aa)). Residue D1346 coordinates Mg(2+).

This sequence belongs to the Bunyavirales RNA polymerase family. In terms of assembly, homomultimer; the oligomeric structure is essential for the polymerase activity. Interacts with nucleoprotein N. Interacts with protein Z; this interaction inhibits viral transcription and replication, Z partially blocks the product exit tunnel for the releasing nascent RNA product. The cofactor is Mn(2+). It depends on Mg(2+) as a cofactor.

It is found in the virion. Its subcellular location is the host cytoplasm. The enzyme catalyses RNA(n) + a ribonucleoside 5'-triphosphate = RNA(n+1) + diphosphate. Functionally, RNA-dependent RNA polymerase, which is responsible for the replication and transcription of the viral RNA genome using antigenomic RNA as an intermediate. During transcription, synthesizes subgenomic RNAs and assures their capping by a cap-snatching mechanism, which involves the endonuclease activity cleaving the host capped pre-mRNAs. These short capped RNAs are then used as primers for viral transcription. The 3'-end of subgenomic mRNAs molecules are heterogeneous and not polyadenylated. The replicase function is to direct synthesis of antigenomic and genomic RNA which are encapsidated and non capped. As a consequence of the use of the same enzyme for both transcription and replication, these mechanisms need to be well coordinated. These processes may be regulated by proteins N and Z in a dose-dependent manner. Z protein inhibits the viral polymerase L und thus the viral transcription and RNA synthesis. The polypeptide is RNA-directed RNA polymerase L (Calomys callosus (Large vesper mouse)).